The primary structure comprises 384 residues: G protein-coupled receptor 88 (384 aa).

Residues 1–35 are Extracellular-facing; the sequence is MTNSSSTSTSTTTGGSLLLLCEEEESWAGRRIPVS. N-linked (GlcNAc...) asparagine glycosylation occurs at N3. The helical transmembrane segment at 36–56 threads the bilayer; the sequence is LLYSGLAIGGTLANGMVIYLV. Residues 57–73 are Cytoplasmic-facing; that stretch reads SSFRKLQTTSNAFIVNG. Residues 74-94 traverse the membrane as a helical segment; it reads CAADLSVCALWMPQEAVLGLL. Residues 95–116 are Extracellular-facing; sequence PSGSAEPPGDWDGGGGSYRLLR. A helical transmembrane segment spans residues 117–136; sequence GGLLGLGLTVSLLSHCLVAL. Residues 137-158 are Cytoplasmic-facing; that stretch reads NRYLLITRAPATYQVLYQRRHT. The helical transmembrane segment at 159–179 threads the bilayer; sequence VGMLALSWALALGLVLLLPPW. Over 180-195 the chain is Extracellular; it reads APKPGAEPPQVHYPAL. A helical transmembrane segment spans residues 196 to 216; the sequence is LAAGALLAQTALLLHCYLGIV. Topologically, residues 217-285 are cytoplasmic; that stretch reads RRVRVSVKRV…RAQRRLSGLS (69 aa). A helical transmembrane segment spans residues 286-306; the sequence is VLLLCCVFLLATQPLVWVSLA. Residues 307–310 are Extracellular-facing; the sequence is SGFS. A helical transmembrane segment spans residues 311-331; that stretch reads LPVPWGVQAASWLLCCALSAL. The Cytoplasmic segment spans residues 332–384; the sequence is NPLLYTWRNEEFRRSVRSVLPGVGDAAAAAAAATAVPAMSQAQLGTRAAGQHW.

This sequence belongs to the G-protein coupled receptor 1 family. Expressed predominantly in the striatum.

It is found in the cell membrane. The protein localises to the cell projection. The protein resides in the cilium membrane. Its subcellular location is the cytoplasm. It localises to the nucleus. In terms of biological role, orphan G protein-coupled receptor implicated in a large repertoire of behavioral responses that engage motor activities, spatial learning, and emotional processing. May play a role in the regulation of cognitive and motor function. Couples with the heterotrimeric G protein complex of the G(i) subfamily, consisting of GNAI1, GNB1 and GNG2, thereby acting through a G(i)-mediated pathway. Plays a role in the attenuation of D1 dopamine receptor (D1R)-mediated cAMP response in ciliated cells. In on-ciliated cells, involved in the inhibition of the beta-2 adrenergic receptor (B2AR) response. This is G protein-coupled receptor 88 (Gpr88) from Mus musculus (Mouse).